Here is a 189-residue protein sequence, read N- to C-terminus: Peptidyl-tRNA hydrolase (189 aa).

Residue Tyr-14 participates in tRNA binding. His-19 functions as the Proton acceptor in the catalytic mechanism. Residues Tyr-64, Asn-66, and Asn-112 each coordinate tRNA.

The protein belongs to the PTH family. As to quaternary structure, monomer.

The protein resides in the cytoplasm. It catalyses the reaction an N-acyl-L-alpha-aminoacyl-tRNA + H2O = an N-acyl-L-amino acid + a tRNA + H(+). In terms of biological role, hydrolyzes ribosome-free peptidyl-tRNAs (with 1 or more amino acids incorporated), which drop off the ribosome during protein synthesis, or as a result of ribosome stalling. Functionally, catalyzes the release of premature peptidyl moieties from peptidyl-tRNA molecules trapped in stalled 50S ribosomal subunits, and thus maintains levels of free tRNAs and 50S ribosomes. This chain is Peptidyl-tRNA hydrolase, found in Clostridium botulinum (strain Kyoto / Type A2).